The chain runs to 117 residues: Ribosome-binding factor A (117 aa).

It belongs to the RbfA family. As to quaternary structure, monomer. Binds 30S ribosomal subunits, but not 50S ribosomal subunits or 70S ribosomes.

The protein resides in the cytoplasm. One of several proteins that assist in the late maturation steps of the functional core of the 30S ribosomal subunit. Associates with free 30S ribosomal subunits (but not with 30S subunits that are part of 70S ribosomes or polysomes). Required for efficient processing of 16S rRNA. May interact with the 5'-terminal helix region of 16S rRNA. This Blochmanniella floridana protein is Ribosome-binding factor A.